Here is a 225-residue protein sequence, read N- to C-terminus: Phosphatidylserine decarboxylase proenzyme (225 aa).

Ser182 acts as the Schiff-base intermediate with substrate; via pyruvic acid in catalysis. Ser182 carries the post-translational modification Pyruvic acid (Ser); by autocatalysis.

Belongs to the phosphatidylserine decarboxylase family. PSD-A subfamily. In terms of assembly, heterodimer of a large membrane-associated beta subunit and a small pyruvoyl-containing alpha subunit. Pyruvate serves as cofactor. Post-translationally, is synthesized initially as an inactive proenzyme. Formation of the active enzyme involves a self-maturation process in which the active site pyruvoyl group is generated from an internal serine residue via an autocatalytic post-translational modification. Two non-identical subunits are generated from the proenzyme in this reaction, and the pyruvate is formed at the N-terminus of the alpha chain, which is derived from the carboxyl end of the proenzyme. The post-translation cleavage follows an unusual pathway, termed non-hydrolytic serinolysis, in which the side chain hydroxyl group of the serine supplies its oxygen atom to form the C-terminus of the beta chain, while the remainder of the serine residue undergoes an oxidative deamination to produce ammonia and the pyruvoyl prosthetic group on the alpha chain.

Its subcellular location is the cell membrane. It carries out the reaction a 1,2-diacyl-sn-glycero-3-phospho-L-serine + H(+) = a 1,2-diacyl-sn-glycero-3-phosphoethanolamine + CO2. It functions in the pathway phospholipid metabolism; phosphatidylethanolamine biosynthesis; phosphatidylethanolamine from CDP-diacylglycerol: step 2/2. Catalyzes the formation of phosphatidylethanolamine (PtdEtn) from phosphatidylserine (PtdSer). This Neorickettsia sennetsu (strain ATCC VR-367 / Miyayama) (Ehrlichia sennetsu) protein is Phosphatidylserine decarboxylase proenzyme.